A 101-amino-acid polypeptide reads, in one-letter code: Small ribosomal subunit protein uS14 (101 aa).

Residues 1–10 are compositionally biased toward basic and acidic residues; it reads MAKKSAIEKN. The tract at residues 1–23 is disordered; that stretch reads MAKKSAIEKNNRRKKMTKNAAPK. Basic residues predominate over residues 11–23; the sequence is NRRKKMTKNAAPK.

In terms of assembly, part of the 30S ribosomal subunit. Contacts proteins S3 and S10.

Its function is as follows. Binds 16S rRNA, required for the assembly of 30S particles and may also be responsible for determining the conformation of the 16S rRNA at the A site. This Rhodopseudomonas palustris (strain ATCC BAA-98 / CGA009) protein is Small ribosomal subunit protein uS14.